Reading from the N-terminus, the 414-residue chain is tRNA N6-adenosine threonylcarbamoyltransferase, mitochondrial (414 aa).

A mitochondrion-targeting transit peptide spans 1–29 (MLILTKTAGVFFKPSKRKVYEFLRSFNFH). N6-acetyllysine is present on residues Lys74 and Lys140. Residues His147 and His151 each coordinate a divalent metal cation. Substrate contacts are provided by residues 169 to 173 (LISGG) and Asp202. Lys203 is modified (N6-acetyllysine). Substrate-binding residues include Gly222 and Glu226. Lys230, Lys240, and Lys299 each carry N6-acetyllysine. Substrate is bound by residues 329–330 (SN) and Thr357. Residue Asp358 participates in a divalent metal cation binding.

The protein belongs to the KAE1 / TsaD family. As to quaternary structure, monomer. Requires a divalent metal cation as cofactor. In terms of tissue distribution, widely expressed, with maximum expression in pituitary gland, prostate, rectum and uterus.

The protein localises to the mitochondrion. The enzyme catalyses L-threonylcarbamoyladenylate + adenosine(37) in tRNA = N(6)-L-threonylcarbamoyladenosine(37) in tRNA + AMP + H(+). In terms of biological role, required for the formation of a threonylcarbamoyl group on adenosine at position 37 (t(6)A37) in mitochondrial tRNAs that read codons beginning with adenine. Probably involved in the transfer of the threonylcarbamoyl moiety of threonylcarbamoyl-AMP (TC-AMP) to the N6 group of A37. Involved in mitochondrial genome maintenance. The sequence is that of tRNA N6-adenosine threonylcarbamoyltransferase, mitochondrial from Homo sapiens (Human).